An 895-amino-acid polypeptide reads, in one-letter code: MISRTYVINLARRPDKKDRILAEFLKLKEKGVELNCVIFEAVDGNNPEHLSRFNFKIPNWTDLNSGKPMTNGEVGCALSHWSVWKDVVDCVENGTLDKDCRILVLEDDVVFLDNFMERYQTYTSEITYNCDLLYLHRKPLNPYTETKISTHIVKPNKSYWACAYVITYQCAKKFMNANYLENLIPSDEFIPIMHGCNVYGFEKLFSNCEKIDCYAVQPSLVKLTSNAFNDSETFHSGSYVPSNKFNFDTDKQFRIVYIGPTKGNSFHRFTEYCKLYLLPYKVIDEKETNDFVSLRSELQSLSEQDLNTTLMLVVSVNHNDFCNTIPCAPTNEFIDKYKQLTTDTNSIVSAVQNGTNKTMFIGWANKISEFINHYHQKLTESNAETDINLANLLLISSISSDFNCVVEDVEGNLFQLINEESDIVFSTTTSRVNNKLGKTPSVLYANSDSSVIVLNKVENYTGYGWNEYYGYHVYPVKFDVLPKIYLSIRIVKNANVTKIAETLDYPKELITVSISRSEHDSFYQADIQKFLLSGADYYFYISGDCIITRPTILKELLELNKDFVGPLMRKGTESWTNYWGDIDPSNGYYKRSFDYFDIIGRDRVGCWNVPYLASVYLIKKSVIEQVPNLFTENSHMWNGSNIDMRLCHNLRKNNVFMYLSNLRPYGHIDDSINLEVLSGVPTEVTLYDLPTRKEEWEKKYLHPEFLSHLQNFKDFDYTEICNDVYSFPLFTPAFCKEVIEVMDKANLWSKGGDSYFDPRIGGVESYPTQDTQLYEVGLDKQWHYVVFNYVAPFVRHLYNNYKTKDINLAFVVKYDMERQSELAPHHDSSTYTLNIALNEYGKEYTAGGCEFIRHKFIWQGQKVGYATIHAGKLLAYHRALPITSGKRYILVSFVN.

The lysyl hydroxylase region stretch occupies residues 1-194 (MISRTYVINL…PSDEFIPIMH (194 aa)). Residues 537-895 (YYFYISGDCI…KRYILVSFVN (359 aa)) are glucosyl transferase region. In terms of domain architecture, Fe2OG dioxygenase spans 805 to 895 (DINLAFVVKY…KRYILVSFVN (91 aa)). Residues histidine 825, aspartate 827, and histidine 877 each contribute to the Fe cation site. Arginine 887 is a catalytic residue.

It depends on Fe cation as a cofactor. The cofactor is L-ascorbate.

The catalysed reaction is L-lysyl-[collagen] + 2-oxoglutarate + O2 = (5R)-5-hydroxy-L-lysyl-[collagen] + succinate + CO2. Displays two enzymatic activities involved in procollagen processing. Forms hydroxylysine residues in -Xaa-Lys-Gly- sequences in collagens. These hydroxylysines are subsequentially glucosylated by a glucosyltransferase activity. Collagen post-translationally modified is detected in mimivirus virion. This is Procollagen lysyl hydroxylase and glycosyltransferase from Acanthamoeba polyphaga (Amoeba).